Here is a 263-residue protein sequence, read N- to C-terminus: Putative alpha/beta hydrolase L404 (263 aa).

G2 carries N-myristoyl glycine; by host lipidation.

This sequence belongs to the AB hydrolase superfamily.

This is Putative alpha/beta hydrolase L404 from Acanthamoeba polyphaga (Amoeba).